A 366-amino-acid polypeptide reads, in one-letter code: UPF0324 membrane protein RSc1111 (366 aa).

8 helical membrane-spanning segments follow: residues Leu21–Ala43, Leu103–Val125, Ala137–Val159, Ala169–Ala191, Val198–Ala220, Val240–Glu262, Trp283–His305, and Ala343–Ala365.

The protein belongs to the UPF0324 family.

Its subcellular location is the cell membrane. This chain is UPF0324 membrane protein RSc1111, found in Ralstonia nicotianae (strain ATCC BAA-1114 / GMI1000) (Ralstonia solanacearum).